Reading from the N-terminus, the 404-residue chain is 4-hydroxyphenylpyruvate dioxygenase (404 aa).

2 VOC domains span residues 28–163 and 194–353; these read GYDH…FIQR and YVDH…IFTK. The Fe cation site is built by His197, His280, and Glu364.

The protein belongs to the 4HPPD family. It depends on Fe cation as a cofactor.

It carries out the reaction 3-(4-hydroxyphenyl)pyruvate + O2 = homogentisate + CO2. It participates in amino-acid degradation; L-phenylalanine degradation; acetoacetate and fumarate from L-phenylalanine: step 3/6. Key enzyme in the degradation of tyrosine. The polypeptide is 4-hydroxyphenylpyruvate dioxygenase (TFA) (Tetrahymena thermophila).